We begin with the raw amino-acid sequence, 414 residues long: Probable 26S proteasome regulatory subunit 6B (414 aa).

Position 202–209 (202–209) interacts with ATP; that stretch reads GPPGCGKT.

The protein belongs to the AAA ATPase family.

The protein resides in the cytoplasm. Its subcellular location is the nucleus. In terms of biological role, the 26S proteasome is involved in the ATP-dependent degradation of ubiquitinated proteins. The regulatory (or ATPase) complex confers ATP dependency and substrate specificity to the 26S complex. The polypeptide is Probable 26S proteasome regulatory subunit 6B (rpt-3) (Caenorhabditis elegans).